A 27-amino-acid polypeptide reads, in one-letter code: Caerulein precursor fragment R8 (27 aa).

Expressed by the skin glands.

It is found in the secreted. Its function is as follows. Antimicrobial peptide. This chain is Caerulein precursor fragment R8, found in Xenopus ruwenzoriensis (Uganda clawed frog).